The chain runs to 356 residues: Nitrilase, arylacetone-specific (356 aa).

Residues 7–280 form the CN hydrolase domain; it reads VRAAAVQAAS…EGLIIADLNM (274 aa). Glu47 (proton acceptor) is an active-site residue. Lys129 functions as the Proton donor in the catalytic mechanism. Catalysis depends on Cys163, which acts as the Nucleophile. A disordered region spans residues 324–356; the sequence is QEEAPEPHVQSTAAPVAVSQTQDSDTLLVQEPS. Positions 332 to 356 are enriched in polar residues; it reads VQSTAAPVAVSQTQDSDTLLVQEPS.

This sequence belongs to the carbon-nitrogen hydrolase superfamily. Nitrilase family. As to quaternary structure, homohexamer.

The enzyme catalyses a nitrile + 2 H2O = a carboxylate + NH4(+). Functionally, nitrilase that acts mostly on arylacetonitriles. This chain is Nitrilase, arylacetone-specific, found in Alcaligenes faecalis.